The sequence spans 253 residues: Ribonuclease HII (253 aa).

The 184-residue stretch at 70–253 (NLIAGIDEVG…KSFEPIKSML (184 aa)) folds into the RNase H type-2 domain. Asp-76, Glu-77, and Asp-168 together coordinate a divalent metal cation.

It belongs to the RNase HII family. It depends on Mn(2+) as a cofactor. Requires Mg(2+) as cofactor.

The protein localises to the cytoplasm. The enzyme catalyses Endonucleolytic cleavage to 5'-phosphomonoester.. Its function is as follows. Endonuclease that specifically degrades the RNA of RNA-DNA hybrids. The polypeptide is Ribonuclease HII (Streptococcus agalactiae serotype III (strain NEM316)).